A 248-amino-acid polypeptide reads, in one-letter code: MAQDDEDVGLALGLSLGSGGHRRQRESRDEAPSSAAASLLTLRLPAESGGQPQVVVKREVVRAEEEEYEYEYERALYSSSAAAADDDEGCNSRKKLRLSKEQSALLEDRFKEHSTLNPKQKVALAKQLNLRPRQVEVWFQNRRARTKLKQTEVDCELLKRCCETLTEENRRLHRELQQLRALTHSTAAGFFMATTLPVPAATLSICPSCERLATAAAAAGASPTAAADRTNKPTAPHLFSPFAKSAAC.

A disordered region spans residues 1-44 (MAQDDEDVGLALGLSLGSGGHRRQRESRDEAPSSAAASLLTLRL). The span at 32–44 (PSSAAASLLTLRL) shows a compositional bias: low complexity. The homeobox DNA-binding region spans 91–150 (NSRKKLRLSKEQSALLEDRFKEHSTLNPKQKVALAKQLNLRPRQVEVWFQNRRARTKLKQ). The tract at residues 149 to 193 (KQTEVDCELLKRCCETLTEENRRLHRELQQLRALTHSTAAGFFMA) is leucine-zipper. The segment at 223 to 248 (PTAAADRTNKPTAPHLFSPFAKSAAC) is disordered.

The protein belongs to the HD-ZIP homeobox family. Class II subfamily. As to expression, expressed in seedlings, stems, leaf blades and panicles.

It localises to the nucleus. Its function is as follows. Probable transcription factor. The polypeptide is Homeobox-leucine zipper protein HOX15 (HOX15) (Oryza sativa subsp. indica (Rice)).